A 450-amino-acid chain; its full sequence is MAARRRPRSAVPRRVATLSVHTSPLDQPGAGDAGGMNVYVVEVSRRLAERGIAVDVFTRAVSSDLPPVVEMSPGVTVRHVSAGPFEGLGKEELPAQLCAFTAAVLREEAQHEPGHYDVVHSHYWLSGQVGWLARDRWSVPLIHTAHTLAKVKNAALAVGDRPEPRARVIGEEQVVAEADRLVANTADEARQLVDHYGADPRRTLVVPPGVDLDRFTPGDRTAARRRLGVAEDAVVLLFVGRIQPLKAPDLLLEAAARMLADDPALRDRLQVHVVGAPSGTGLEAPRQLEQLAAGLGIADLLRFLPPVHVELLAEHYRAADVAVVPSHNESFGLVALEAQACGTPVVAAAVGGLRTAVRDGVSGVLVEGRDPADYAAAIRAVLARRELLSAGARRHAGAFSWERTVDSLVAAYTAAAEEMAAASQRAVPGTLLRPAWALGGVRALGAQVAR.

H21 is a 1D-myo-inositol 3-phosphate binding site. UDP-N-acetyl-alpha-D-glucosamine-binding positions include 27–28 (QP) and G35. 1D-myo-inositol 3-phosphate contacts are provided by residues 32 to 37 (DAGGMN), K90, Y123, T147, and R167. UDP-N-acetyl-alpha-D-glucosamine-binding residues include R241, K246, and V307. Residues Y316, R317, and A319 each contribute to the Mg(2+) site. Residues E329 and E337 each coordinate UDP-N-acetyl-alpha-D-glucosamine. Residue T343 coordinates Mg(2+).

It belongs to the glycosyltransferase group 1 family. MshA subfamily. Homodimer.

It carries out the reaction 1D-myo-inositol 3-phosphate + UDP-N-acetyl-alpha-D-glucosamine = 1D-myo-inositol 2-acetamido-2-deoxy-alpha-D-glucopyranoside 3-phosphate + UDP + H(+). Functionally, catalyzes the transfer of a N-acetyl-glucosamine moiety to 1D-myo-inositol 3-phosphate to produce 1D-myo-inositol 2-acetamido-2-deoxy-glucopyranoside 3-phosphate in the mycothiol biosynthesis pathway. The polypeptide is D-inositol 3-phosphate glycosyltransferase (Geodermatophilus obscurus (strain ATCC 25078 / DSM 43160 / JCM 3152 / CCUG 61914 / KCC A-0152 / KCTC 9177 / NBRC 13315 / NRRL B-3577 / G-20)).